The primary structure comprises 310 residues: Homoserine kinase (310 aa).

An ATP-binding site is contributed by Pro-91–Cys-101.

Belongs to the GHMP kinase family. Homoserine kinase subfamily.

Its subcellular location is the cytoplasm. It catalyses the reaction L-homoserine + ATP = O-phospho-L-homoserine + ADP + H(+). Its pathway is amino-acid biosynthesis; L-threonine biosynthesis; L-threonine from L-aspartate: step 4/5. In terms of biological role, catalyzes the ATP-dependent phosphorylation of L-homoserine to L-homoserine phosphate. The polypeptide is Homoserine kinase (Escherichia coli (strain SE11)).